The primary structure comprises 306 residues: IN2-2 protein (306 aa).

Residue Tyr64 is the Proton donor of the active site. His131 is a substrate binding site. Ser210–Gly220 contacts NADP(+). Residues Leu272–Gly306 form a disordered region. Over residues Pro276 to Asn289 the composition is skewed to basic residues.

The protein belongs to the aldo/keto reductase family. Aldo/keto reductase 2 subfamily. In terms of tissue distribution, leaves and roots.

The chain is IN2-2 protein (IN2-2) from Zea mays (Maize).